Reading from the N-terminus, the 1236-residue chain is Chitinase-like protein PB1E7.04c (1236 aa).

The first 19 residues, 1-19, serve as a signal peptide directing secretion; the sequence is MRLISSLLLLVYSARLALS. N-linked (GlcNAc...) asparagine glycosylation is found at Asn21, Asn24, Asn54, Asn123, Asn225, Asn237, Asn255, Asn267, Asn277, Asn288, and Asn309. Residues 26 to 325 enclose the GH18 domain; that stretch reads TAVLGYWGSN…EAIHKILDTK (300 aa). Disordered regions lie at residues 326-367, 449-497, and 584-625; these read SKHS…TSSA, VSSI…QSTL, and TSSP…STIL. The segment covering 339–351 has biased composition (polar residues); the sequence is QGLESTSSIALNP. A compositionally biased stretch (low complexity) spans 352–367; that stretch reads TSSISSTSSSSSTSSA. Asn715, Asn737, Asn768, Asn786, and Asn813 each carry an N-linked (GlcNAc...) asparagine glycan. 4 disordered regions span residues 804–836, 868–927, 946–979, and 1125–1159; these read ISTS…LAAN, TTAL…TSSS, TPTS…SSIA, and AASG…TPSN. Over residues 810 to 821 the composition is skewed to polar residues; it reads NEYNTSFHAPTV. Residues 822-832 are compositionally biased toward low complexity; that stretch reads SSTTSSSSTTS. Positions 1125–1156 are enriched in low complexity; sequence AASGSSTVTSSATASSSSSAATTADSSVTTDT.

The protein belongs to the glycosyl hydrolase 18 family. Chitinase class III subfamily.

It is found in the secreted. This Schizosaccharomyces pombe (strain 972 / ATCC 24843) (Fission yeast) protein is Chitinase-like protein PB1E7.04c.